The sequence spans 336 residues: Aspartate carbamoyltransferase catalytic subunit (336 aa).

Carbamoyl phosphate-binding residues include Arg72 and Thr73. Residue Lys100 participates in L-aspartate binding. The carbamoyl phosphate site is built by Arg122, His155, and Gln158. 2 residues coordinate L-aspartate: Arg188 and Arg242. Carbamoyl phosphate contacts are provided by Gly288 and Pro289.

It belongs to the aspartate/ornithine carbamoyltransferase superfamily. ATCase family. In terms of assembly, heterododecamer (2C3:3R2) of six catalytic PyrB chains organized as two trimers (C3), and six regulatory PyrI chains organized as three dimers (R2).

The enzyme catalyses carbamoyl phosphate + L-aspartate = N-carbamoyl-L-aspartate + phosphate + H(+). Its pathway is pyrimidine metabolism; UMP biosynthesis via de novo pathway; (S)-dihydroorotate from bicarbonate: step 2/3. Catalyzes the condensation of carbamoyl phosphate and aspartate to form carbamoyl aspartate and inorganic phosphate, the committed step in the de novo pyrimidine nucleotide biosynthesis pathway. This chain is Aspartate carbamoyltransferase catalytic subunit, found in Lactobacillus leichmannii.